Consider the following 108-residue polypeptide: UPF0060 membrane protein Ent638_1931 (108 aa).

Helical transmembrane passes span Leu6 to Leu26, Gly29 to Leu49, Ala61 to Val81, and Ala85 to Trp105.

It belongs to the UPF0060 family.

The protein resides in the cell inner membrane. The chain is UPF0060 membrane protein Ent638_1931 from Enterobacter sp. (strain 638).